Reading from the N-terminus, the 439-residue chain is Skin secretory protein xP2 (439 aa).

Positions Met1 to Gly22 are cleaved as a signal peptide. The interval Ala25–Cys351 is disordered. Repeat copies occupy residues Gly26 to Glu33, Gly34 to Glu41, Gly42 to Glu51, Gly52 to Glu59, and Gly60 to Glu69. The segment at Gly26 to Glu343 is 33 X approximate repeats of G-G(0,1)-[EV](0,1)-A-P-[A-P](1,3)-A-E. Positions Gly26 to Gly345 are enriched in low complexity. One copy of the 6; approximate repeat lies at Gly70–Asp77. Tandem repeats lie at residues Gly78–Glu87, Gly88–Glu97, Gly98–Glu107, Gly108–Glu115, Gly116–Glu125, Gly126–Glu135, Gly136–Glu145, Gly146–Glu153, and Gly154–Glu163. Residues Val164–Glu173 form a 16; approximate repeat. 14 tandem repeats follow at residues Gly174 to Glu183, Gly184 to Glu193, Gly194 to Glu203, Gly204 to Glu215, Gly216 to Glu225, Gly226 to Glu235, Gly236 to Glu245, Gly246 to Glu255, Gly256 to Glu265, Gly266 to Glu275, Gly276 to Glu285, Gly286 to Glu293, Gly294 to Glu303, and Gly304 to Glu313. The 31; approximate repeat unit spans residues Gly314–Glu321. The 32; approximate repeat unit spans residues Gly322–Glu331. One copy of the 33; approximate repeat lies at Gly332–Glu343. P-type domains are found at residues Glu349–Arg392 and Ala396–Lys439. 6 disulfides stabilise this stretch: Cys351/Cys377, Cys361/Cys376, Cys371/Cys388, Cys398/Cys424, Cys408/Cys423, and Cys418/Cys435.

As to expression, skin.

Its subcellular location is the secreted. May act as a growth factor in the germinal layer of the epidermis. May also be involved in growth of regenerating glands and in protection of the skin from the external environment. This is Skin secretory protein xP2 (p2) from Xenopus laevis (African clawed frog).